The chain runs to 192 residues: Archaemetzincin (192 aa).

A Zn(2+)-binding site is contributed by histidine 137. The active-site Proton acceptor is glutamate 138. Histidine 141, histidine 147, cysteine 148, cysteine 153, cysteine 172, and cysteine 175 together coordinate Zn(2+).

Belongs to the peptidase M54 family. In terms of assembly, monomer. Zn(2+) is required as a cofactor.

Probable zinc metalloprotease whose natural substrate is unknown. The sequence is that of Archaemetzincin from Pyrococcus furiosus (strain ATCC 43587 / DSM 3638 / JCM 8422 / Vc1).